Here is a 158-residue protein sequence, read N- to C-terminus: Lipoprotein signal peptidase (158 aa).

The next 3 helical transmembrane spans lie at 12-32 (LFWW…AWIV), 46-66 (IIPG…FSLF), and 71-91 (IWLR…AILG). Active-site residues include Asp124 and Asp140. The chain crosses the membrane as a helical span at residues 135 to 155 (VFNVADIAINIGIVCLLWSAW).

Belongs to the peptidase A8 family.

It localises to the cell inner membrane. It carries out the reaction Release of signal peptides from bacterial membrane prolipoproteins. Hydrolyzes -Xaa-Yaa-Zaa-|-(S,diacylglyceryl)Cys-, in which Xaa is hydrophobic (preferably Leu), and Yaa (Ala or Ser) and Zaa (Gly or Ala) have small, neutral side chains.. It functions in the pathway protein modification; lipoprotein biosynthesis (signal peptide cleavage). This protein specifically catalyzes the removal of signal peptides from prolipoproteins. The polypeptide is Lipoprotein signal peptidase (Thermosynechococcus vestitus (strain NIES-2133 / IAM M-273 / BP-1)).